The chain runs to 89 residues: Large ribosomal subunit protein bL27 (89 aa).

Positions 1-21 (MAHKKAGGSSRNGRDSKGKRL) are disordered.

This sequence belongs to the bacterial ribosomal protein bL27 family.

This Bradyrhizobium sp. (strain BTAi1 / ATCC BAA-1182) protein is Large ribosomal subunit protein bL27.